The chain runs to 137 residues: Small ribosomal subunit protein uS19 (137 aa).

It belongs to the universal ribosomal protein uS19 family.

In terms of biological role, protein S19 forms a complex with S13 that binds strongly to the 16S ribosomal RNA. This chain is Small ribosomal subunit protein uS19, found in Methanospirillum hungatei JF-1 (strain ATCC 27890 / DSM 864 / NBRC 100397 / JF-1).